A 564-amino-acid polypeptide reads, in one-letter code: NAD-dependent malic enzyme (564 aa).

Residue Y102 is the Proton donor of the active site. R155 provides a ligand contact to NAD(+). K173 acts as the Proton acceptor in catalysis. A divalent metal cation contacts are provided by E244, D245, and D268. D268 and N417 together coordinate NAD(+).

Belongs to the malic enzymes family. As to quaternary structure, homotetramer. It depends on Mg(2+) as a cofactor. Mn(2+) is required as a cofactor.

It carries out the reaction (S)-malate + NAD(+) = pyruvate + CO2 + NADH. It catalyses the reaction oxaloacetate + H(+) = pyruvate + CO2. The protein is NAD-dependent malic enzyme of Pseudomonas aeruginosa (strain ATCC 15692 / DSM 22644 / CIP 104116 / JCM 14847 / LMG 12228 / 1C / PRS 101 / PAO1).